Consider the following 484-residue polypeptide: tRNA sulfurtransferase (484 aa).

Residues 63 to 167 (QAFGERLACI…RDNLYMVTKR (105 aa)) enclose the THUMP domain. Residues 185–186 (LI), Lys-267, Gly-289, and Gln-298 contribute to the ATP site. A disulfide bridge links Cys-346 with Cys-458. Residues 406–484 (IDTNQVVIDI…GYTNVKVYRP (79 aa)) enclose the Rhodanese domain. Cys-458 serves as the catalytic Cysteine persulfide intermediate.

The protein belongs to the ThiI family.

It localises to the cytoplasm. The enzyme catalyses [ThiI sulfur-carrier protein]-S-sulfanyl-L-cysteine + a uridine in tRNA + 2 reduced [2Fe-2S]-[ferredoxin] + ATP + H(+) = [ThiI sulfur-carrier protein]-L-cysteine + a 4-thiouridine in tRNA + 2 oxidized [2Fe-2S]-[ferredoxin] + AMP + diphosphate. It carries out the reaction [ThiS sulfur-carrier protein]-C-terminal Gly-Gly-AMP + S-sulfanyl-L-cysteinyl-[cysteine desulfurase] + AH2 = [ThiS sulfur-carrier protein]-C-terminal-Gly-aminoethanethioate + L-cysteinyl-[cysteine desulfurase] + A + AMP + 2 H(+). The protein operates within cofactor biosynthesis; thiamine diphosphate biosynthesis. Functionally, catalyzes the ATP-dependent transfer of a sulfur to tRNA to produce 4-thiouridine in position 8 of tRNAs, which functions as a near-UV photosensor. Also catalyzes the transfer of sulfur to the sulfur carrier protein ThiS, forming ThiS-thiocarboxylate. This is a step in the synthesis of thiazole, in the thiamine biosynthesis pathway. The sulfur is donated as persulfide by IscS. This Shewanella baltica (strain OS155 / ATCC BAA-1091) protein is tRNA sulfurtransferase.